A 262-amino-acid polypeptide reads, in one-letter code: MTDQPILMFDSGVGGLTVLREARVLMPDRRFVYVADDAAFPFGAWEEPALRTHILDLFVKLLDRFAPAISVIACNTASTLVIDALRERFPGHPFVGTVPAVKPAAERTRSGLVSVLATPGTVKRQYTRDLISKWAQKCHVRLVGSDRLAGLAEVYMREGFVDEEAVRAEIAPCFMEHEGLRTDIVVLACTHYPFLVNRMRKTAPWPVDWIDPAEAIARRALSLLPPVDGALPQGEPDIAVFTSGKTDFAIGRLMQGFGLSVR.

Residues 10–11 and 42–43 each bind substrate; these read DS and FG. Cys-74 acts as the Proton donor/acceptor in catalysis. A substrate-binding site is contributed by 75 to 76; the sequence is NT. Cys-189 (proton donor/acceptor) is an active-site residue. A substrate-binding site is contributed by 190 to 191; it reads TH.

Belongs to the aspartate/glutamate racemases family.

It catalyses the reaction L-glutamate = D-glutamate. Its pathway is cell wall biogenesis; peptidoglycan biosynthesis. Provides the (R)-glutamate required for cell wall biosynthesis. This Mesorhizobium japonicum (strain LMG 29417 / CECT 9101 / MAFF 303099) (Mesorhizobium loti (strain MAFF 303099)) protein is Glutamate racemase.